The sequence spans 119 residues: Fluoride-specific ion channel FluC 1 (119 aa).

Helical transmembrane passes span 6–26, 31–51, 66–86, and 91–111; these read VALV…IAVV, FPWG…AIVY, VVAT…GETI, and RLAA…VLVA.

This sequence belongs to the fluoride channel Fluc/FEX (TC 1.A.43) family.

The protein localises to the cell membrane. The catalysed reaction is fluoride(in) = fluoride(out). In terms of biological role, fluoride-specific ion channel. Important for reducing fluoride concentration in the cell, thus reducing its toxicity. The chain is Fluoride-specific ion channel FluC 1 from Natronomonas pharaonis (strain ATCC 35678 / DSM 2160 / CIP 103997 / JCM 8858 / NBRC 14720 / NCIMB 2260 / Gabara) (Halobacterium pharaonis).